The primary structure comprises 56 residues: MAKSKGARIVVTLECRSAEGVYRYTTTKNRRNNPNKMELKKYCPLSKKHEVFKEIK.

It belongs to the bacterial ribosomal protein bL33 family.

Its subcellular location is the plastid. The protein resides in the chloroplast. This is Large ribosomal subunit protein bL33c from Rhodomonas salina (Cryptomonas salina).